Consider the following 269-residue polypeptide: Interleukin-1 beta (269 aa).

Positions 1 to 116 (MAEVPELASE…TRNNDACVHD (116 aa)) are excised as a propeptide.

It belongs to the IL-1 family. As to quaternary structure, monomer. In its precursor form, weakly interacts with full-length MEFV; the mature cytokine does not interact at all. Interacts with integrins ITGAV:ITGBV and ITGA5:ITGB1; integrin-binding is required for IL1B signaling. Interacts with cargo receptor TMED10; the interaction is direct and is required for the secretion of IL1B mature form. Interacts with HSP90AB1; the interaction facilitates cargo translocation into the ERGIC. Interacts with HSP90B1; the interaction facilitates cargo translocation into the ERGIC.

It localises to the cytoplasm. The protein localises to the cytosol. Its subcellular location is the secreted. It is found in the lysosome. The protein resides in the extracellular exosome. Its function is as follows. Potent pro-inflammatory cytokine. Initially discovered as the major endogenous pyrogen, induces prostaglandin synthesis, neutrophil influx and activation, T-cell activation and cytokine production, B-cell activation and antibody production, and fibroblast proliferation and collagen production. Promotes Th17 differentiation of T-cells. Synergizes with IL12/interleukin-12 to induce IFNG synthesis from T-helper 1 (Th1) cells. Plays a role in angiogenesis by inducing VEGF production synergistically with TNF and IL6. Involved in transduction of inflammation downstream of pyroptosis: its mature form is specifically released in the extracellular milieu by passing through the gasdermin-D (GSDMD) pore. This Macaca nemestrina (Pig-tailed macaque) protein is Interleukin-1 beta (IL1B).